Consider the following 686-residue polypeptide: Polyribonucleotide nucleotidyltransferase (686 aa).

Mg(2+) contacts are provided by Asp478 and Asp484. A KH domain is found at 545–604 (PRVEVIQIPTDKIGLLIGPGGKTINALQDEYGVNISVENDGTVYVAGVEGMSVKAAVSAI). Residues 614–684 (GDIYVGKVVK…KQNRISLEMV (71 aa)) enclose the S1 motif domain.

The protein belongs to the polyribonucleotide nucleotidyltransferase family. Requires Mg(2+) as cofactor.

It localises to the cytoplasm. The catalysed reaction is RNA(n+1) + phosphate = RNA(n) + a ribonucleoside 5'-diphosphate. In terms of biological role, involved in mRNA degradation. Catalyzes the phosphorolysis of single-stranded polyribonucleotides processively in the 3'- to 5'-direction. This chain is Polyribonucleotide nucleotidyltransferase, found in Rubrobacter xylanophilus (strain DSM 9941 / JCM 11954 / NBRC 16129 / PRD-1).